The following is a 77-amino-acid chain: Putative ankyrin repeat protein RC0956 (77 aa).

An ANK repeat occupies 8 to 38 (TDISPLMLASEYGQVTIVKYLLKHGNYNVKG).

The polypeptide is Putative ankyrin repeat protein RC0956 (Rickettsia conorii (strain ATCC VR-613 / Malish 7)).